The following is a 708-amino-acid chain: O-antigen chain terminator bifunctional methyltransferase/kinase WbdD (708 aa).

The segment at Met-1 to Asn-210 is methyltransferase. S-adenosyl-L-methionine contacts are provided by residues Tyr-16–Gln-17, Arg-36, Gly-61, Asp-82–Asn-87, Gly-108–Glu-111, and Leu-128. Residues His-211–Arg-459 are kinase. ATP contacts are provided by residues Pro-229, His-237, Arg-241–Tyr-243, Lys-252, Glu-274, Glu-309–Leu-311, Met-358, and Asp-369. Residues Ala-485–Ser-594 are a coiled coil. A required for membrane-binding region spans residues Tyr-601–Pro-669. Positions Val-687–Lys-708 are required for localizing WbdA to the membrane.

Belongs to the WbdD family. Homotrimer in solution. Interacts with WbdA.

Its subcellular location is the cell inner membrane. The catalysed reaction is 3-O-phospho-alpha-D-Man-(1-&gt;2)-alpha-D-Man-(1-&gt;2)-[alpha-D-Man-(1-&gt;3)-alpha-D-Man-(1-&gt;3)-alpha-D-Man-(1-&gt;2)-alpha-D-Man-(1-&gt;2)](n)-alpha-D-Man-(1-&gt;3)-alpha-D-Man-(1-&gt;3)-alpha-D-Man-(1-&gt;3)-alpha-D-GlcNAc-di-trans,octa-cis-undecaprenyl diphosphate + S-adenosyl-L-methionine = 3-O-methylphospho-alpha-D-Man-(1-&gt;2)-alpha-D-Man-(1-&gt;2)-[alpha-D-Man-(1-&gt;3)-alpha-D-Man-(1-&gt;3)-alpha-D-Man-(1-&gt;2)-alpha-D-Man-(1-&gt;2)](n)-alpha-D-Man-(1-&gt;3)-alpha-D-Man-(1-&gt;3)-alpha-D-Man-(1-&gt;3)-alpha-D-GlcNAc-di-trans,octa-cis-undecaprenyl diphosphate + S-adenosyl-L-homocysteine. It carries out the reaction alpha-D-Man-(1-&gt;2)-alpha-D-Man-(1-&gt;2)-[alpha-D-Man-(1-&gt;3)-alpha-D-Man-(1-&gt;3)-alpha-D-Man-(1-&gt;2)-alpha-D-Man-(1-&gt;2)](n)-alpha-D-Man-(1-&gt;3)-alpha-D-Man-(1-&gt;3)-alpha-D-Man-(1-&gt;3)-alpha-D-GlcNAc-di-trans,octa-cis-undecaprenyl diphosphate + ATP = 3-O-phospho-alpha-D-Man-(1-&gt;2)-alpha-D-Man-(1-&gt;2)-[alpha-D-Man-(1-&gt;3)-alpha-D-Man-(1-&gt;3)-alpha-D-Man-(1-&gt;2)-alpha-D-Man-(1-&gt;2)](n)-alpha-D-Man-(1-&gt;3)-alpha-D-Man-(1-&gt;3)-alpha-D-Man-(1-&gt;3)-alpha-D-GlcNAc-di-trans,octa-cis-undecaprenyl diphosphate + ADP + H(+). Its pathway is bacterial outer membrane biogenesis; LPS O-antigen biosynthesis. Its function is as follows. Regulates the length of the LPS O-antigen polysaccharide chain. Stops the polymerization of the chain by phosphorylating and then methylating the phosphate on the terminal sugar. This terminal modification is essential for export of the O-antigen across the inner membrane. WbdD is also required for correct localization of the WbdA mannosyltransferase. This is O-antigen chain terminator bifunctional methyltransferase/kinase WbdD from Escherichia coli.